Here is a 218-residue protein sequence, read N- to C-terminus: UPF0502 protein Geob_1184 (218 aa).

This sequence belongs to the UPF0502 family.

This Geotalea daltonii (strain DSM 22248 / JCM 15807 / FRC-32) (Geobacter daltonii) protein is UPF0502 protein Geob_1184.